The chain runs to 423 residues: Cyclin-B2-1 (423 aa).

Residues 1–61 (MDRASENRRL…EKSGKEEQKP (61 aa)) form a disordered region. Basic and acidic residues predominate over residues 49–60 (PMLEKSGKEEQK).

Belongs to the cyclin family. Cyclin AB subfamily. As to quaternary structure, interacts with CDKB2-1. As to expression, expressed in the intercalary meristem and the elongation zone of internodes. Expressed in adventitious roots at all nodes under submergence conditions.

Functionally, involved in the control of the cell cycle at the G2/M (mitosis) transition. May activate CDKB2-1 kinase. In Oryza sativa subsp. indica (Rice), this protein is Cyclin-B2-1 (CYCB2-1).